The chain runs to 156 residues: Small ribosomal subunit protein uS7 (156 aa).

The protein belongs to the universal ribosomal protein uS7 family. Part of the 30S ribosomal subunit. Contacts proteins S9 and S11.

One of the primary rRNA binding proteins, it binds directly to 16S rRNA where it nucleates assembly of the head domain of the 30S subunit. Is located at the subunit interface close to the decoding center, probably blocks exit of the E-site tRNA. This chain is Small ribosomal subunit protein uS7, found in Aster yellows witches'-broom phytoplasma (strain AYWB).